Consider the following 278-residue polypeptide: MAIRKYKPTTPGRRGASVADFVEVTRSTPEKSLVRPLHSKGGRNNAGRITVRHQGGGHKRAYRIVDFRRHDKDGVPAKVAHIEYDPNRSARIALLHYADGEKRYILAPRNLQQGDRVENGPGADIKPGNNLALRNIPVGTTIHAIELRPGGGAKFARSAGASVQLLAKEGAYAHLRMPSGEIRLVNVRCRATIGEVGNAEQSNINWGKAGRKRWLGVRPTVRGVVMNPVDHPHGGGEGRTSGGRHPVSPWGKPTGRTRSNKKASNKYIVRRRTKNKKR.

Disordered stretches follow at residues 29–55 and 225–278; these read PEKS…RHQG and VMNP…NKKR. Over residues 258–278 the composition is skewed to basic residues; sequence RSNKKASNKYIVRRRTKNKKR.

Belongs to the universal ribosomal protein uL2 family. In terms of assembly, part of the 50S ribosomal subunit. Forms a bridge to the 30S subunit in the 70S ribosome. Post-translationally, the N-terminus is blocked. In terms of processing, phosphorylated on serine and threonine residues.

In terms of biological role, one of the primary rRNA binding proteins. Required for association of the 30S and 50S subunits to form the 70S ribosome, for tRNA binding and peptide bond formation. It has been suggested to have peptidyltransferase activity; this is somewhat controversial. Makes several contacts with the 16S rRNA in the 70S ribosome. The polypeptide is Large ribosomal subunit protein uL2 (Streptomyces collinus).